The chain runs to 311 residues: Transmembrane protein 177 (311 aa).

At 1-17 the chain is on the mitochondrial matrix side; that stretch reads MAGPLWRTAAFVQRHRT. A helical transmembrane segment spans residues 18–38; it reads GLLVGSCAGLFGVPISYHLFP. Residues 39–166 lie on the Mitochondrial intermembrane side of the membrane; sequence DPVVQWLYQY…EVVYLESSTT (128 aa). The chain crosses the membrane as a helical span at residues 167-187; it reads AVHALLAPACLAGTWALGVGA. Over 188 to 197 the chain is Mitochondrial matrix; the sequence is KYTLGLHAGP. A helical transmembrane segment spans residues 198-218; sequence MNLRAAFSLVAAVAGFVAYAF. Over 219–311 the chain is Mitochondrial intermembrane; the sequence is SQDSLTHAVE…WRGMLNPGRS (93 aa).

The protein belongs to the TMEM177 family. In terms of assembly, found in a complex with COX20, COA6, MT-CO2/COX2, COX18, SCO1 and SCO2. Interacts with COX20. Interacts with COX1, MT-CO2/COX2, SCO1 and SCO2 in a COX20-dependent manner.

The protein localises to the mitochondrion inner membrane. Plays a role in the early steps of cytochrome c oxidase subunit II (MT-CO2/COX2) maturation and is required for the stabilization of COX20 and the newly synthesized MT-CO2/COX2 protein. The sequence is that of Transmembrane protein 177 (TMEM177) from Homo sapiens (Human).